Here is a 118-residue protein sequence, read N- to C-terminus: Phospholipase A2 'basic' (118 aa).

Cystine bridges form between Cys11-Cys70, Cys26-Cys117, Cys28-Cys44, Cys43-Cys98, Cys50-Cys91, Cys59-Cys84, and Cys77-Cys89. Positions 27, 29, and 31 each coordinate Ca(2+). His47 is a catalytic residue. Position 48 (Asp48) interacts with Ca(2+). The Coagulation factor Xa binding motif motif lies at 52 to 69; sequence EKAGKMGCWPYLTLYKYK. Residue Asp92 is part of the active site.

Belongs to the phospholipase A2 family. Group I subfamily. D49 sub-subfamily. Requires Ca(2+) as cofactor. As to expression, expressed by the venom gland.

The protein localises to the secreted. The enzyme catalyses a 1,2-diacyl-sn-glycero-3-phosphocholine + H2O = a 1-acyl-sn-glycero-3-phosphocholine + a fatty acid + H(+). Its function is as follows. Snake venom phospholipase A2 (PLA2) that shows strong anticoagulant activity. Binds directly with the coagulation factor FXa (F10) and blocks the formation of the prothombinase complex. Acts by a nonenzymatic mechanism. Also inhibits the complex composed of tissue factor (F3) and coagulation factor VIIa (F7) (TF-VIIa complex) by both enzymatic and nonenzymatic mechanisms. PLA2 catalyzes the calcium-dependent hydrolysis of the 2-acyl groups in 3-sn-phosphoglycerides. The polypeptide is Phospholipase A2 'basic' (Naja nigricollis (Black-necked spitting cobra)).